We begin with the raw amino-acid sequence, 103 residues long: uncharacterized protein (103 aa).

This is an uncharacterized protein from Dictyostelium discoideum (Social amoeba).